Reading from the N-terminus, the 64-residue chain is MPKMKTKSGAAKRFKKTAGGLKHKHAFKSHILTKMTTKRKRQLRGTSMLNKSDVARVERSLRLR.

Over residues 1 to 28 (MPKMKTKSGAAKRFKKTAGGLKHKHAFK) the composition is skewed to basic residues. Residues 1 to 64 (MPKMKTKSGA…ARVERSLRLR (64 aa)) are disordered. Positions 53 to 64 (DVARVERSLRLR) are enriched in basic and acidic residues.

The protein belongs to the bacterial ribosomal protein bL35 family.

In Pseudomonas aeruginosa (strain LESB58), this protein is Large ribosomal subunit protein bL35.